Consider the following 500-residue polypeptide: Probable glycine dehydrogenase (decarboxylating) subunit 2 (500 aa).

The interval 1-25 (MLIFEHSRPGRRNYSQSPKAAEATD) is disordered. Lys263 carries the N6-(pyridoxal phosphate)lysine modification.

It belongs to the GcvP family. C-terminal subunit subfamily. In terms of assembly, the glycine cleavage system is composed of four proteins: P, T, L and H. In this organism, the P 'protein' is a heterodimer of two subunits. The cofactor is pyridoxal 5'-phosphate.

The enzyme catalyses N(6)-[(R)-lipoyl]-L-lysyl-[glycine-cleavage complex H protein] + glycine + H(+) = N(6)-[(R)-S(8)-aminomethyldihydrolipoyl]-L-lysyl-[glycine-cleavage complex H protein] + CO2. The glycine cleavage system catalyzes the degradation of glycine. The P protein binds the alpha-amino group of glycine through its pyridoxal phosphate cofactor; CO(2) is released and the remaining methylamine moiety is then transferred to the lipoamide cofactor of the H protein. This chain is Probable glycine dehydrogenase (decarboxylating) subunit 2, found in Nitrosospira multiformis (strain ATCC 25196 / NCIMB 11849 / C 71).